Consider the following 626-residue polypeptide: Probable potassium transport system protein Kup 3 (626 aa).

Transmembrane regions (helical) follow at residues 10–30 (LATL…TSPL), 51–71 (VLGI…LKYV), 107–127 (VLLG…TPAI), 141–161 (PAFK…LFIF), 173–193 (FGPV…AAIV), 216–236 (LLGF…EALY), 251–271 (WLGY…ALLL), 293–313 (LVAL…SGAF), 341–361 (IYLP…VIEF), 371–391 (YGIA…AVAV), 401–421 (AMLG…ANSV), and 423–443 (IADG…LLTT).

This sequence belongs to the HAK/KUP transporter (TC 2.A.72) family.

Its subcellular location is the cell inner membrane. The catalysed reaction is K(+)(in) + H(+)(in) = K(+)(out) + H(+)(out). In terms of biological role, transport of potassium into the cell. Likely operates as a K(+):H(+) symporter. The sequence is that of Probable potassium transport system protein Kup 3 from Dechloromonas aromatica (strain RCB).